The primary structure comprises 67 residues: Kappa-conotoxin-like 1 (67 aa).

The first 26 residues, 1 to 26 (MMFRLTSVSCFLLVIACLNLFQVVLT), serve as a signal peptide directing secretion. 4 cysteine pairs are disulfide-bonded: C29-C43, C36-C48, C42-C51, and C47-C55. Isoleucine amide is present on I59. Positions 63–67 (ATFQE) are excised as a propeptide.

The protein belongs to the conotoxin I2 superfamily. Expressed by the venom duct.

The protein resides in the secreted. Inhibits the vertebrate voltage-gated potassium channels Kv1.1/KCNA1 and Kv1.3/KCNA3. The polypeptide is Kappa-conotoxin-like 1 (Conus vexillum (Flag cone)).